Consider the following 147-residue polypeptide: Large ribosomal subunit protein bL9 (147 aa).

Belongs to the bacterial ribosomal protein bL9 family.

Functionally, binds to the 23S rRNA. The chain is Large ribosomal subunit protein bL9 from Clostridium kluyveri (strain NBRC 12016).